Reading from the N-terminus, the 2116-residue chain is Non-structural polyprotein p200 (2116 aa).

Residues 36 to 49 (EVRDVVTAAQKRAI) form a required for efficient proteolysis and P150-P90 interaction region. The Alphavirus-like MT domain occupies 57–247 (VFTQMQVSDH…TRPCTTRIYQ (191 aa)). Residues 457–467 (GPLEDGGRHLD) show a composition bias toward basic and acidic residues. 2 disordered regions span residues 457–477 (GPLE…SPPR) and 712–805 (AGPR…ADPD). Composition is skewed to pro residues over residues 721–730 (SPPPGDPPPP) and 745–776 (TPPP…PIPA). 3 short sequence motifs (pxxPxR; class II SH3-binding) span residues 727–732 (PPPPRR), 747–752 (PPAPAR), and 761–766 (PPAPPR). Residues 806–985 (SDIVESYARA…LTHASVLVGA (180 aa)) form the Macro domain. Residues 992–1031 (VSPPPTEPLASCPAGDPGRPAQRSASPPATPLGDATAPEP) form a disordered region. The region spanning 1000–1301 (LASCPAGDPG…WLAVPLSRGG (302 aa)) is the Peptidase C27 domain. The For cysteine protease activity role is filled by Cys-1152. The interaction with host CALM1 stretch occupies residues 1152–1183 (CWLRAAANVAQAARACGAYTSAGCPKCAYGRA). Cys-1175, Cys-1178, Cys-1227, and His-1273 together coordinate Zn(2+). Residues 1193 to 1228 (FAALSQRWSASHADASPDGTGDPLDPLMETVGCACS) form an EF-hand-like region. His-1273 functions as the For cysteine protease activity in the catalytic mechanism. The (+)RNA virus helicase ATP-binding domain maps to 1320 to 1468 (EVRRLGDDAM…VPDRWPTERS (149 aa)). 1352-1359 (MAAGAGKT) lines the a ribonucleoside 5'-triphosphate pocket. Residues 1469–1609 (RHTWRFPDCW…ELKEVPAGID (141 aa)) form the (+)RNA virus helicase C-terminal domain. The tract at residues 1700–1900 (YRAGEDGSTL…VELEISAALL (201 aa)) is involved in P150-P90 interaction. The region spanning 1870–1981 (TNAIEVDFTE…FLPEGARSAA (112 aa)) is the RdRp catalytic domain. A Human RB1 binding motif is present at residues 1902 to 1906 (LPCAE).

In terms of assembly, interacts with RNA-directed RNA polymerase p90. Interacts with host CALM1; this interaction is necessary for the protease activity and viral infectivity. Interacts with host C1QBP. Interacts with the capsid protein. Interacts with human RB1/retinoblastoma protein. Interacts with protease/methyltransferase p150. Zn(2+) is required as a cofactor. In terms of processing, specific enzymatic cleavage by its own cysteine protease yield mature proteins p150 and p90.

The protein localises to the host membrane. It localises to the host cytoplasm. It is found in the host perinuclear region. It carries out the reaction RNA(n) + a ribonucleoside 5'-triphosphate = RNA(n+1) + diphosphate. It catalyses the reaction a ribonucleoside 5'-triphosphate + H2O = a ribonucleoside 5'-diphosphate + phosphate + H(+). The enzyme catalyses ATP + H2O = ADP + phosphate + H(+). Probable principal replicase for the negative-strand DNA, which replicates the 40S (+) genomic RNA into (-) antigenomic RNA. It cannot replicate the (-) into (+) until cleaved into p150 and p90 mature proteins. In terms of biological role, protease that cleaves the precursor polyprotein into two mature products. Together with RNA-directed RNA polymerase p90, replicates the 40S genomic and antigenomic RNA by recognizing replications specific signals. The heterodimer P150/p90 is probably the principal replicase for positive-strand genomic RNA and the 24S subgenomic RNA, which codes for structural proteins. Responsible for the mRNA-capping of the viral mRNAs. This function is necessary since all viral RNAs are synthesized in the cytoplasm, and host capping enzymes are restricted to the nucleus. Forms fibers late in the infection that may be involved in cell-to-cell spread of the virus RNA in the absence of virus particle formation. Its function is as follows. Together with protease/methyltransferase p150, replicates the 40S genomic and antigenomic RNA by recognizing replications specific signals. The heterodimer P150/p90 is probably the principal replicase for positive-strand genomic RNA and the 24S subgenomic RNA, which codes for structural proteins. A helicase activity is probably also present. The polypeptide is Non-structural polyprotein p200 (Rubella virus (strain Therien) (RUBV)).